A 370-amino-acid polypeptide reads, in one-letter code: sn-glycerol-3-phosphate import ATP-binding protein UgpC (370 aa).

An ABC transporter domain is found at 4–235 (LRLDGIRKRY…PATRFVASFL (232 aa)). An ATP-binding site is contributed by 37-44 (GPSGCGKS).

This sequence belongs to the ABC transporter superfamily. sn-glycerol-3-phosphate importer (TC 3.A.1.1.3) family. The complex is composed of two ATP-binding proteins (UgpC), two transmembrane proteins (UgpA and UgpE) and a solute-binding protein (UgpB).

It localises to the cell inner membrane. The catalysed reaction is sn-glycerol 3-phosphate(out) + ATP + H2O = sn-glycerol 3-phosphate(in) + ADP + phosphate + H(+). Its function is as follows. Part of the ABC transporter complex UgpBAEC involved in sn-glycerol-3-phosphate (G3P) import. Responsible for energy coupling to the transport system. The chain is sn-glycerol-3-phosphate import ATP-binding protein UgpC from Chromohalobacter salexigens (strain ATCC BAA-138 / DSM 3043 / CIP 106854 / NCIMB 13768 / 1H11).